A 51-amino-acid polypeptide reads, in one-letter code: Large ribosomal subunit protein eL39 (51 aa).

The protein belongs to the eukaryotic ribosomal protein eL39 family.

This is Large ribosomal subunit protein eL39 from Thermococcus sibiricus (strain DSM 12597 / MM 739).